The following is an 82-amino-acid chain: Small ribosomal subunit protein bS16 (82 aa).

It belongs to the bacterial ribosomal protein bS16 family.

The chain is Small ribosomal subunit protein bS16 from Synechococcus elongatus (strain ATCC 33912 / PCC 7942 / FACHB-805) (Anacystis nidulans R2).